Here is a 258-residue protein sequence, read N- to C-terminus: D-aminoacyl-tRNA deacylase (258 aa).

This sequence belongs to the DtdA deacylase family. In terms of assembly, monomer. Zn(2+) is required as a cofactor.

It carries out the reaction a D-aminoacyl-tRNA + H2O = a tRNA + a D-alpha-amino acid + H(+). The catalysed reaction is glycyl-tRNA(Ala) + H2O = tRNA(Ala) + glycine + H(+). Functionally, D-aminoacyl-tRNA deacylase with broad substrate specificity. By recycling D-aminoacyl-tRNA to D-amino acids and free tRNA molecules, this enzyme counteracts the toxicity associated with the formation of D-aminoacyl-tRNA entities in vivo. The polypeptide is D-aminoacyl-tRNA deacylase (Cenarchaeum symbiosum (strain A)).